The chain runs to 223 residues: Transcriptional regulatory protein PhoP (223 aa).

The Response regulatory domain occupies 2–116 (RVLVVEDNAL…EVMARMQALM (115 aa)). At aspartate 51 the chain carries 4-aspartylphosphate. Positions 124 to 222 (SQVISLPPFQ…VRGQGYLFEL (99 aa)) form a DNA-binding region, ompR/PhoB-type.

Monomer in the inactive, unphosphorylated state and dimer in the active, phosphorylated state. Post-translationally, phosphorylated by PhoQ.

It localises to the cytoplasm. With respect to regulation, feedback inhibited by MgrB, which seems to bind PhoQ, altering its activity and that of downstream effector PhoP. PhoP-regulated transcription is redox-sensitive, being activated when the periplasm becomes more reducing (deletion of dsbA/dsbB, or treatment with dithiothreitol). MgrB acts between DsbA/DsbB and PhoP/PhoQ in this pathway. Functionally, member of the two-component regulatory system PhoP/PhoQ involved in adaptation to low Mg(2+) environments and the control of acid resistance genes. In low periplasmic Mg(2+), PhoQ phosphorylates PhoP, resulting in the expression of PhoP-activated genes (PAG) and repression of PhoP-repressed genes (PRG). In high periplasmic Mg(2+), PhoQ dephosphorylates phospho-PhoP, resulting in the repression of PAG and may lead to expression of some PRG. Mediates magnesium influx to the cytosol by activation of MgtA. Promotes expression of the two-component regulatory system rstA/rstB and transcription of the hemL, mgrB, nagA, slyB, vboR and yrbL genes. In Escherichia coli (strain K12), this protein is Transcriptional regulatory protein PhoP (phoP).